A 238-amino-acid chain; its full sequence is Lactate utilization protein A (238 aa).

Belongs to the LutA/YkgE family.

Functionally, is involved in L-lactate degradation and allows cells to grow with lactate as the sole carbon source. The chain is Lactate utilization protein A from Bacillus velezensis (strain DSM 23117 / BGSC 10A6 / LMG 26770 / FZB42) (Bacillus amyloliquefaciens subsp. plantarum).